Consider the following 66-residue polypeptide: Large ribosomal subunit protein bL33 (66 aa).

The protein belongs to the bacterial ribosomal protein bL33 family.

This is Large ribosomal subunit protein bL33 from Prochlorococcus marinus (strain MIT 9303).